A 427-amino-acid chain; its full sequence is MGSVRTNRYSIVSSEEDGMKLATMAVANGFGNGKSKVHTRQQCRSRFVKKDGHCNVQFINVGEKGQRYLADIFTTCVDIRWRWMLVIFCLAFVLSWLFFGCVFWLIALLHGDLDASKEGKACVSEVNSFTAAFLFSIETQTTIGYGFRCVTDECPIAVFMVVFQSIVGCIIDAFIIGAVMAKMAKPKKRNETLVFSHNAVIAMRDGKLCLMWRVGNLRKSHLVEAHVRAQLLKSRITSEGEYIPLDQIDINVGFDSGIDRIFLVSPITIVHEIDEDSPLYDLSKQDIDNADFEIVVILEGMVEATAMTTQCRSSYLANEILWGHRYEPVLFEEKHYYKVDYSRFHKTYEVPNTPLCSARDLAEKKYILSNANSFCYENEVALTSKEEDDSENGVPESTSTDTPPDIDLHNQASVPLEPRPLRRESEI.

The Cytoplasmic segment spans residues Met-1–Trp-81. S-nitrosocysteine is present on Cys-76. A helical transmembrane segment spans residues Arg-82–Ile-106. Residues Ala-107–Ser-128 are Extracellular-facing. The helical; Pore-forming intramembrane region spans Phe-129 to Gln-140. An intramembrane region (pore-forming) is located at residues Thr-141 to Phe-147. Residues Thr-142–Phe-147 carry the Selectivity filter motif. Residues Arg-148–Ile-156 lie on the Extracellular side of the membrane. Residues Ala-157–Ala-178 form a helical membrane-spanning segment. At Val-179 to Ile-427 the chain is on the cytoplasmic side. The interval Ala-181 to Leu-208 is polyphosphoinositide (PIP2)-binding. A disordered region spans residues Ser-384 to Ile-427. Residues Ser-425–Ile-427 carry the PDZ-binding motif.

This sequence belongs to the inward rectifier-type potassium channel (TC 1.A.2.1) family. KCNJ2 subfamily. In terms of assembly, homotetramer. Homomultimeric and heteromultimeric association with KCNJ4/Kir2.3. Can form heteromeric channels with Kir2.6/KCNJ18. Associates, via its PDZ-recognition domain, with a complex containing LIN7A, LIN7B, LIN7C, DLG1, CASK and APBA1. S-nitrosylation increases the open probability and inward rectifying currents.

The protein resides in the cell membrane. It localises to the sarcolemma. The protein localises to the T-tubule. The enzyme catalyses K(+)(in) = K(+)(out). With respect to regulation, activated by phosphatidylinositol 4,5 biphosphate (PtdIns(4,5)P2). In terms of biological role, inward rectifier potassium channels are characterized by a greater tendency to allow potassium to flow into the cell rather than out of it. Their voltage dependence is regulated by the concentration of extracellular potassium; as external potassium is raised, the voltage range of the channel opening shifts to more positive voltages. The inward rectification is mainly due to the blockage of outward current by internal magnesium. Can be blocked by extracellular barium or cesium. Probably participates in establishing action potential waveform and excitability of neuronal and muscle tissues. The protein is Inward rectifier potassium channel 2 (KCNJ2) of Macaca mulatta (Rhesus macaque).